Reading from the N-terminus, the 414-residue chain is MAALKYAGLEDTDSEEELPPGWEERTTKDGWVYYANHLEEKTQWEHPKSGKRKRVAGGLPYGWEQETDENGQVYFVDHINKRTTYLDPRLAFTVEDNPAKPPTRQKYDGNSTAMEILQGRDLSGKVIIITGANSGIGFETAKSFALHGAYVILACRNMSRGNDAVQRILEEWHKAKVEAMTLDLASLRSVQNFAEAFKSKNMPLHILVCNAAIFGSSWCLTEDGLESTFQVNHLGHFYLVQLLEDILRRSSPARVVVVSSESHRFTEIKDSSGKLDFSLLSPSKKEYWAMLAYNRSKLCNILFSNELNRRLSPHGVTSNSVHPGNMIYSSIHRNWWVYTLLFTLARPFTKSMQQGAATTVYCATAAELEGLGGMYFNNCCRCLPSAEARNELTAVALWELSERLIREQLGRRSP.

A disordered region spans residues 1–23 (MAALKYAGLEDTDSEEELPPGWE). The WW 1 domain maps to 16 to 49 (EELPPGWEERTTKDGWVYYANHLEEKTQWEHPKS). Positions 50-55 (GKRKRV) match the Nuclear localization signal motif. The WW 2 domain maps to 57–90 (GGLPYGWEQETDENGQVYFVDHINKRTTYLDPRL). An NADP(+)-binding site is contributed by 131-137 (GANSGIG). Ser260 lines the substrate pocket. Tyr293 acts as the Proton acceptor in catalysis.

It belongs to the short-chain dehydrogenases/reductases (SDR) family.

Its subcellular location is the cytoplasm. It is found in the mitochondrion. It localises to the golgi apparatus. The protein resides in the lysosome. In terms of biological role, putative oxidoreductase. Acts as a tumor suppressor and plays a role in apoptosis. May function synergistically with p53/TP53 to control genotoxic stress-induced cell death. Plays a role in TGFB1 signaling and TGFB1-mediated cell death. May also play a role in tumor necrosis factor (TNF)-mediated cell death. Required for normal bone development. Inhibits Wnt signaling. This is WW domain-containing oxidoreductase (WWOX) from Gallus gallus (Chicken).